Consider the following 358-residue polypeptide: MLYHLLYPLAADFRIFNVFKYLTFRTIYAVITALVVSFILGPWVIRKLEALQARQVIRTDGPESHLKKSGTPTMGGILILASIVIPTLLWADLTNRYVWTTLFVILGYGLIGFTDDYKKVVEKDTKGLSPRQKMFWQMLIAGGAVCFLVLVAGMSTELSVPFFKRLHPDLSYLYIPFGMLVVVGASNAVNLTDGLDGLAIGPVAINAATFLLFAYIAGNAKLSSYLQTPYVPGAGELAVLCGAMVGAGIGFLWYNAYPAEVFMGDVGSLSLGGGLGILAVITKQEMLLVIVGGIFVVEALSVIFQVGSYKYRGKRIFRMAPIHHHFELKGVAEPKIIVRFWIITIILALVAISTLKLR.

A run of 10 helical transmembrane segments spans residues 25–45 (RTIY…PWVI), 73–93 (TMGG…WADL), 97–117 (YVWT…TDDY), 134–154 (MFWQ…VAGM), 172–192 (YLYI…VNLT), 197–217 (GLAI…AYIA), 233–253 (GAGE…GFLW), 261–281 (VFMG…LAVI), 286–306 (MLLV…IFQV), and 335–355 (KIIV…ISTL).

Belongs to the glycosyltransferase 4 family. MraY subfamily. It depends on Mg(2+) as a cofactor.

Its subcellular location is the cell inner membrane. It carries out the reaction UDP-N-acetyl-alpha-D-muramoyl-L-alanyl-gamma-D-glutamyl-meso-2,6-diaminopimeloyl-D-alanyl-D-alanine + di-trans,octa-cis-undecaprenyl phosphate = di-trans,octa-cis-undecaprenyl diphospho-N-acetyl-alpha-D-muramoyl-L-alanyl-D-glutamyl-meso-2,6-diaminopimeloyl-D-alanyl-D-alanine + UMP. Its pathway is cell wall biogenesis; peptidoglycan biosynthesis. Functionally, catalyzes the initial step of the lipid cycle reactions in the biosynthesis of the cell wall peptidoglycan: transfers peptidoglycan precursor phospho-MurNAc-pentapeptide from UDP-MurNAc-pentapeptide onto the lipid carrier undecaprenyl phosphate, yielding undecaprenyl-pyrophosphoryl-MurNAc-pentapeptide, known as lipid I. This is Phospho-N-acetylmuramoyl-pentapeptide-transferase from Geobacter sulfurreducens (strain ATCC 51573 / DSM 12127 / PCA).